Here is a 385-residue protein sequence, read N- to C-terminus: Chaperone protein DnaJ (385 aa).

In terms of domain architecture, J spans 3-68 (DYYEILGVTR…QKRAAYDRFG (66 aa)). Residues 135–213 (GAEVEITVPA…CHGHGQVRRE (79 aa)) form a CR-type zinc finger. Zn(2+) is bound by residues Cys148, Cys151, Cys165, Cys168, Cys187, Cys190, Cys201, and Cys204. 4 CXXCXGXG motif repeats span residues 148 to 155 (CEVCEGSG), 165 to 172 (CGTCGGAG), 187 to 194 (CPRCGGSG), and 201 to 208 (CSNCHGHG).

It belongs to the DnaJ family. Homodimer. The cofactor is Zn(2+).

It localises to the cytoplasm. In terms of biological role, participates actively in the response to hyperosmotic and heat shock by preventing the aggregation of stress-denatured proteins and by disaggregating proteins, also in an autonomous, DnaK-independent fashion. Unfolded proteins bind initially to DnaJ; upon interaction with the DnaJ-bound protein, DnaK hydrolyzes its bound ATP, resulting in the formation of a stable complex. GrpE releases ADP from DnaK; ATP binding to DnaK triggers the release of the substrate protein, thus completing the reaction cycle. Several rounds of ATP-dependent interactions between DnaJ, DnaK and GrpE are required for fully efficient folding. Also involved, together with DnaK and GrpE, in the DNA replication of plasmids through activation of initiation proteins. The polypeptide is Chaperone protein DnaJ (Caulobacter vibrioides (strain ATCC 19089 / CIP 103742 / CB 15) (Caulobacter crescentus)).